The primary structure comprises 887 residues: Putative RNA-binding protein 15B (887 aa).

A disordered region spans residues 1 to 132 (MKRQSERDSS…EPAGPGSTAA (132 aa)). A compositionally biased stretch (low complexity) spans 10-20 (SPSGRGSSSSA). Composition is skewed to basic and acidic residues over residues 22-34 (RPRE…EAGG) and 65-77 (GHRD…DANH). Residues 83 to 94 (RSSGAPGGGGRT) are compositionally biased toward gly residues. The segment covering 95 to 110 (GKASGDPGAGGASPRA) has biased composition (low complexity). 2 positions are modified to phosphoserine: serine 107 and serine 111. The segment covering 111 to 122 (SPLPPPPPPPGA) has biased composition (pro residues). The span at 123-132 (EPAGPGSTAA) shows a compositional bias: low complexity. Residues 136–216 (KTLLISSLSP…RPLKVEPVYL (81 aa)) form the RRM 1 domain. A Glycyl lysine isopeptide (Lys-Gly) (interchain with G-Cter in SUMO2) cross-link involves residue lysine 210. The interval 215-249 (YLRGGGSSRRSSSSSAAASTPPPGPPAPADPLGYL) is disordered. Over residues 222–233 (SRRSSSSSAAAS) the composition is skewed to low complexity. Residues 234–243 (TPPPGPPAPA) are compositionally biased toward pro residues. Residues serine 261 and serine 263 each carry the phosphoserine modification. RRM domains follow at residues 333–410 (RNLF…YGKA) and 414–488 (TRLW…FAKA). Threonine 529 carries the post-translational modification Phosphothreonine. Phosphoserine occurs at positions 549, 553, and 559. The disordered stretch occupies residues 549 to 703 (SLSKSSDRRN…TLEEPKHETK (155 aa)). Composition is skewed to basic and acidic residues over residues 570–613 (RSGE…ERSR), 623–643 (RGSD…EGTK), and 668–700 (EAPD…EPKH). A Nuclear localization signal motif is present at residues 590–594 (RRKRR). Lysine 699 is covalently cross-linked (Glycyl lysine isopeptide (Lys-Gly) (interchain with G-Cter in SUMO2)). One can recognise an SPOC domain in the interval 708–886 (LSEYAQTLQL…HMVIVIVRDT (179 aa)). Residues 719-887 (WNGLLVLKNS…MVIVIVRDTA (169 aa)) form an interaction with Epstein-Barr virus BMLF1 region.

The protein belongs to the RRM Spen family. As to quaternary structure, component of the WMM complex, a N6-methyltransferase complex composed of a catalytic subcomplex, named MAC, and of an associated subcomplex, named MACOM. The MAC subcomplex is composed of METTL3 and METTL14. The MACOM subcomplex is composed of WTAP, ZC3H13, CBLL1/HAKAI, VIRMA, and, in some cases of RBM15 (RBM15 or RBM15B). May interact with NCOR2. Interacts with NXF1, the interaction is required to promote mRNA export.

It localises to the nucleus. Its subcellular location is the nucleoplasm. The protein resides in the nucleus speckle. The protein localises to the nucleus envelope. Its function is as follows. RNA-binding protein that acts as a key regulator of N6-methyladenosine (m6A) methylation of RNAs, thereby regulating different processes, such as alternative splicing of mRNAs and X chromosome inactivation mediated by Xist RNA. Associated component of the WMM complex, a complex that mediates N6-methyladenosine (m6A) methylation of RNAs, a modification that plays a role in the efficiency of mRNA splicing and RNA processing. Plays a key role in m6A methylation, possibly by binding target RNAs and recruiting the WMM complex. Involved in random X inactivation mediated by Xist RNA: acts by binding Xist RNA and recruiting the WMM complex, which mediates m6A methylation, leading to target YTHDC1 reader on Xist RNA and promoting transcription repression activity of Xist. Functions in the regulation of alternative or illicit splicing, possibly by regulating m6A methylation. Inhibits pre-mRNA splicing. Also functions as a mRNA export factor by acting as a cofactor for the nuclear export receptor NXF1. The chain is Putative RNA-binding protein 15B (Rbm15b) from Mus musculus (Mouse).